The primary structure comprises 74 residues: uncharacterized protein (74 aa).

The stretch at 29-63 forms a coiled coil; sequence LNSKKSALQKDKELQQQAKAQESALAGEELRRRAL.

This is an uncharacterized protein from Pseudoalteromonas phage PM2 (Bacteriophage PM2).